We begin with the raw amino-acid sequence, 173 residues long: Alpha-crystallin A chain (173 aa).

N-acetylmethionine is present on methionine 1. A sHSP domain is found at 52 to 164 (LFRSVLESGI…SDRPIPVARE (113 aa)). 4 residues coordinate Zn(2+): histidine 100, glutamate 102, histidine 107, and histidine 154. Residues 152–173 (TIHSDRPIPVAREEKPTSAPSS) form a disordered region. Residues 153 to 167 (IHSDRPIPVAREEKP) are compositionally biased toward basic and acidic residues.

It belongs to the small heat shock protein (HSP20) family. As to quaternary structure, heteropolymer composed of three CRYAA and one CRYAB subunits. Inter-subunit bridging via zinc ions enhances stability, which is crucial as there is no protein turn over in the lens. Can also form homodimers and homotetramers (dimers of dimers) which serve as the building blocks of homooligomers. Within homooligomers, the zinc-binding motif is created from residues of 3 different molecules. His-100 and Glu-102 from one molecule are ligands of the zinc ion, and His-107 and His-154 residues from additional molecules complete the site with tetrahedral coordination geometry.

The protein localises to the cytoplasm. It localises to the nucleus. In terms of biological role, contributes to the transparency and refractive index of the lens. May act as a chaperone, preventing aggregation of various proteins under a wide range of stress conditions. This chain is Alpha-crystallin A chain (CRYAA), found in Alligator mississippiensis (American alligator).